A 286-amino-acid polypeptide reads, in one-letter code: Protease HtpX homolog (286 aa).

2 helical membrane-spanning segments follow: residues T6–G26 and Q28–S48. Residue H130 participates in Zn(2+) binding. The active site involves E131. Position 134 (H134) interacts with Zn(2+). 2 helical membrane-spanning segments follow: residues I140–A160 and A178–I198. Residue E203 coordinates Zn(2+).

Belongs to the peptidase M48B family. Requires Zn(2+) as cofactor.

The protein localises to the cell inner membrane. The chain is Protease HtpX homolog from Campylobacter curvus (strain 525.92).